Here is a 140-residue protein sequence, read N- to C-terminus: Calcitonin (140 aa).

Residues 1 to 25 form the signal peptide; that stretch reads MGFWKFSPFLPLSILVLYQVGIIQA. Residues 26-81 constitute a propeptide that is removed on maturation; it reads APFRSALESLPDPAVLPEEESRLLLAALVKDYVQMKVRALEQEQETGGASLDSPRA. The cysteines at positions 84 and 90 are disulfide-linked. P115 carries the proline amide modification. Positions 120-140 are excised as a propeptide; that stretch reads VMARGLERDHGPHIGTSQDAY.

It belongs to the calcitonin family.

Its subcellular location is the secreted. Its function is as follows. Calcitonin is a peptide hormone that causes a rapid but short-lived drop in the level of calcium and phosphate in blood by promoting the incorporation of those ions in the bones. Calcitonin function is mediated by the calcitonin receptor/CALCR and the CALCR-RAMP2 (AMYR2) receptor complex. This Equus caballus (Horse) protein is Calcitonin (CALCA).